We begin with the raw amino-acid sequence, 247 residues long: Putative methyltransferase GWCH70_2453 (247 aa).

It belongs to the methyltransferase superfamily.

Its function is as follows. May be a S-adenosyl-L-methionine (SAM)-dependent methyltransferase. This Geobacillus sp. (strain WCH70) protein is Putative methyltransferase GWCH70_2453.